The following is a 461-amino-acid chain: Homogentisate 1,2-dioxygenase (461 aa).

Fe cation is bound by residues His341, Glu347, and His377.

This sequence belongs to the homogentisate dioxygenase family. Fe cation serves as cofactor.

The catalysed reaction is homogentisate + O2 = 4-maleylacetoacetate + H(+). It participates in amino-acid degradation; L-phenylalanine degradation; acetoacetate and fumarate from L-phenylalanine: step 4/6. In Arabidopsis thaliana (Mouse-ear cress), this protein is Homogentisate 1,2-dioxygenase (HGO).